Reading from the N-terminus, the 534-residue chain is Probable alpha-galactosidase A (534 aa).

Residues 1–25 (MRLITRWIPLANALASTMPVQVVAS) form the signal peptide. Cys-47 and Cys-79 form a disulfide bridge. Asn-50, Asn-88, Asn-94, and Asn-124 each carry an N-linked (GlcNAc...) asparagine glycan. Cys-127 and Cys-157 are joined by a disulfide. The active-site Nucleophile is Asp-155. An N-linked (GlcNAc...) asparagine glycan is attached at Asn-204. The active-site Proton donor is Asp-213. The Ricin B-type lectin domain occupies 413-534 (CSQVIPTGLI…GLPAGVHVAL (122 aa)). Cys-430 and Cys-443 are disulfide-bonded. N-linked (GlcNAc...) asparagine glycosylation is present at Asn-444. The cysteines at positions 468 and 481 are disulfide-linked.

This sequence belongs to the glycosyl hydrolase 27 family.

Its subcellular location is the secreted. The enzyme catalyses Hydrolysis of terminal, non-reducing alpha-D-galactose residues in alpha-D-galactosides, including galactose oligosaccharides, galactomannans and galactolipids.. Functionally, hydrolyzes a variety of simple alpha-D-galactoside as well as more complex molecules such as oligosaccharides and polysaccharides. In Aspergillus flavus (strain ATCC 200026 / FGSC A1120 / IAM 13836 / NRRL 3357 / JCM 12722 / SRRC 167), this protein is Probable alpha-galactosidase A (aglA).